The sequence spans 52 residues: Large ribosomal subunit protein eL40 (52 aa).

Cysteine 20, cysteine 23, cysteine 34, and cysteine 39 together coordinate Zn(2+).

The protein belongs to the eukaryotic ribosomal protein eL40 family. As to quaternary structure, component of the large ribosomal subunit. Mature ribosomes consist of a small (40S) and a large (60S) subunit. The 40S subunit contains about 32 different proteins and 1 molecule of RNA (18S). The 60S subunit contains 45 different proteins and 3 molecules of RNA (25S, 5.8S and 5S). It depends on Zn(2+) as a cofactor.

It localises to the cytoplasm. Its function is as follows. Component of the ribosome, a large ribonucleoprotein complex responsible for the synthesis of proteins in the cell. The small ribosomal subunit (SSU) binds messenger RNAs (mRNAs) and translates the encoded message by selecting cognate aminoacyl-transfer RNA (tRNA) molecules. The large subunit (LSU) contains the ribosomal catalytic site termed the peptidyl transferase center (PTC), which catalyzes the formation of peptide bonds, thereby polymerizing the amino acids delivered by tRNAs into a polypeptide chain. The nascent polypeptides leave the ribosome through a tunnel in the LSU and interact with protein factors that function in enzymatic processing, targeting, and the membrane insertion of nascent chains at the exit of the ribosomal tunnel. The polypeptide is Large ribosomal subunit protein eL40 (Candida albicans (strain SC5314 / ATCC MYA-2876) (Yeast)).